The sequence spans 513 residues: ATP synthase subunit alpha (513 aa).

169–176 (GDRQVGKT) serves as a coordination point for ATP.

The protein belongs to the ATPase alpha/beta chains family. As to quaternary structure, F-type ATPases have 2 components, CF(1) - the catalytic core - and CF(0) - the membrane proton channel. CF(1) has five subunits: alpha(3), beta(3), gamma(1), delta(1), epsilon(1). CF(0) has three main subunits: a(1), b(2) and c(9-12). The alpha and beta chains form an alternating ring which encloses part of the gamma chain. CF(1) is attached to CF(0) by a central stalk formed by the gamma and epsilon chains, while a peripheral stalk is formed by the delta and b chains.

The protein resides in the cell inner membrane. It carries out the reaction ATP + H2O + 4 H(+)(in) = ADP + phosphate + 5 H(+)(out). Produces ATP from ADP in the presence of a proton gradient across the membrane. The alpha chain is a regulatory subunit. In Aeromonas salmonicida (strain A449), this protein is ATP synthase subunit alpha.